A 449-amino-acid chain; its full sequence is Signal recognition particle protein (449 aa).

GTP contacts are provided by residues 109–116, 191–195, and 249–252; these read GLQGSGKT, DTAGR, and SRID.

The protein belongs to the GTP-binding SRP family. SRP54 subfamily. In terms of assembly, part of the signal recognition particle protein translocation system, which is composed of SRP and FtsY. SRP is a ribonucleoprotein composed of Ffh and a 4.5S RNA molecule.

The protein localises to the cytoplasm. It carries out the reaction GTP + H2O = GDP + phosphate + H(+). Its function is as follows. Involved in targeting and insertion of nascent membrane proteins into the cytoplasmic membrane. Binds to the hydrophobic signal sequence of the ribosome-nascent chain (RNC) as it emerges from the ribosomes. The SRP-RNC complex is then targeted to the cytoplasmic membrane where it interacts with the SRP receptor FtsY. Interaction with FtsY leads to the transfer of the RNC complex to the Sec translocase for insertion into the membrane, the hydrolysis of GTP by both Ffh and FtsY, and the dissociation of the SRP-FtsY complex into the individual components. The sequence is that of Signal recognition particle protein from Rickettsia conorii (strain ATCC VR-613 / Malish 7).